The sequence spans 410 residues: Killer cell immunoglobulin-like receptor 3DL3 (410 aa).

Positions 1-25 are cleaved as a signal peptide; sequence MSLMVVSMACVGFFLLEGPWPHVGG. Residues 26–322 lie on the Extracellular side of the membrane; that stretch reads QDKPFLSAWP…VSVTGNSRHL (297 aa). Ig-like C2-type domains lie at 42–97, 137–197, and 237–295; these read GQHV…RCCS, GETV…RCFG, and GENV…RCFG. Disulfide bonds link Cys-49–Cys-95 and Cys-144–Cys-195. Residues Asn-179, Asn-239, and Asn-273 are each glycosylated (N-linked (GlcNAc...) asparagine). Residues Cys-244 and Cys-293 are joined by a disulfide bond. Residues 323–343 form a helical membrane-spanning segment; the sequence is HVLIGTSVVIIPFAILLFFLL. Residues 344-410 are Cytoplasmic-facing; it reads HRWCANKKNA…PKTPPTDTSV (67 aa).

The protein belongs to the immunoglobulin superfamily.

The protein localises to the cell membrane. Functionally, receptor on natural killer cells. May inhibit the activity of NK cells thus preventing cell lysis. In Homo sapiens (Human), this protein is Killer cell immunoglobulin-like receptor 3DL3 (KIR3DL3).